A 204-amino-acid polypeptide reads, in one-letter code: GATA transcription factor 14 (204 aa).

Positions 57 to 66 are enriched in basic and acidic residues; sequence REFDTNDSKP. The interval 57–102 is disordered; the sequence is REFDTNDSKPSRNFSNLPTATRGRLHAPKRSGNKRGRQKRLSFKSP. The segment covering 79 to 98 has biased composition (basic residues); sequence GRLHAPKRSGNKRGRQKRLS. The GATA-type zinc-finger motif lies at 111–165; that stretch reads GITDKSCSHCGTRKTPLWREGPRGAGTLCNACGMRYRTGRLLPEYRPASSPDFKP. Residues 180 to 204 form a disordered region; that stretch reads RERKSSPPNSFGFSESYHSTRKLGF. The segment covering 185-196 has biased composition (polar residues); sequence SPPNSFGFSESY.

The protein belongs to the type IV zinc-finger family. Class A subfamily.

It is found in the nucleus. Its function is as follows. Transcriptional activator that specifically binds 5'-GATA-3' or 5'-GAT-3' motifs within gene promoters. May be involved in the regulation of some light-responsive genes. This Arabidopsis thaliana (Mouse-ear cress) protein is GATA transcription factor 14 (GATA14).